The following is a 600-amino-acid chain: Chaperone protein DnaK (600 aa).

Phosphothreonine; by autocatalysis is present on Thr-175. Positions 569–578 (SFAQATAQQA) are enriched in low complexity. Residues 569–600 (SFAQATAQQANTSESDPKADDSNTIDAEIKQD) are disordered. Residues 583 to 600 (SDPKADDSNTIDAEIKQD) are compositionally biased toward basic and acidic residues.

It belongs to the heat shock protein 70 family.

Its function is as follows. Acts as a chaperone. The sequence is that of Chaperone protein DnaK from Mesomycoplasma hyopneumoniae (strain 7448) (Mycoplasma hyopneumoniae).